We begin with the raw amino-acid sequence, 149 residues long: UPF0178 protein Psyc_0274 (149 aa).

The protein belongs to the UPF0178 family.

The protein is UPF0178 protein Psyc_0274 of Psychrobacter arcticus (strain DSM 17307 / VKM B-2377 / 273-4).